Here is a 453-residue protein sequence, read N- to C-terminus: Bifunctional protein GlmU (453 aa).

The tract at residues 1 to 225 is pyrophosphorylase; sequence MNIVILAAGT…EWETLGVNSK (225 aa). UDP-N-acetyl-alpha-D-glucosamine-binding positions include 6 to 9, K20, Q71, 76 to 77, 98 to 100, G135, E150, N165, and N223; these read LAAG, GT, and YGD. D100 serves as a coordination point for Mg(2+). N223 contacts Mg(2+). A linker region spans residues 226-246; that stretch reads AQLAELERIHQRKLAEALLAD. The N-acetyltransferase stretch occupies residues 247 to 453; the sequence is GVTLADPARI…GYVRPVKKKS (207 aa). 2 residues coordinate UDP-N-acetyl-alpha-D-glucosamine: R329 and K347. The active-site Proton acceptor is the H359. Y362 and N373 together coordinate UDP-N-acetyl-alpha-D-glucosamine. Residues A376, 382-383, S401, and A419 each bind acetyl-CoA; that span reads NY.

In the N-terminal section; belongs to the N-acetylglucosamine-1-phosphate uridyltransferase family. The protein in the C-terminal section; belongs to the transferase hexapeptide repeat family. As to quaternary structure, homotrimer. The cofactor is Mg(2+).

The protein localises to the cytoplasm. It catalyses the reaction alpha-D-glucosamine 1-phosphate + acetyl-CoA = N-acetyl-alpha-D-glucosamine 1-phosphate + CoA + H(+). The enzyme catalyses N-acetyl-alpha-D-glucosamine 1-phosphate + UTP + H(+) = UDP-N-acetyl-alpha-D-glucosamine + diphosphate. Its pathway is nucleotide-sugar biosynthesis; UDP-N-acetyl-alpha-D-glucosamine biosynthesis; N-acetyl-alpha-D-glucosamine 1-phosphate from alpha-D-glucosamine 6-phosphate (route II): step 2/2. It participates in nucleotide-sugar biosynthesis; UDP-N-acetyl-alpha-D-glucosamine biosynthesis; UDP-N-acetyl-alpha-D-glucosamine from N-acetyl-alpha-D-glucosamine 1-phosphate: step 1/1. The protein operates within bacterial outer membrane biogenesis; LPS lipid A biosynthesis. Functionally, catalyzes the last two sequential reactions in the de novo biosynthetic pathway for UDP-N-acetylglucosamine (UDP-GlcNAc). The C-terminal domain catalyzes the transfer of acetyl group from acetyl coenzyme A to glucosamine-1-phosphate (GlcN-1-P) to produce N-acetylglucosamine-1-phosphate (GlcNAc-1-P), which is converted into UDP-GlcNAc by the transfer of uridine 5-monophosphate (from uridine 5-triphosphate), a reaction catalyzed by the N-terminal domain. The sequence is that of Bifunctional protein GlmU from Burkholderia thailandensis (strain ATCC 700388 / DSM 13276 / CCUG 48851 / CIP 106301 / E264).